A 214-amino-acid chain; its full sequence is 3,4-dihydroxy-2-butanone 4-phosphate synthase (214 aa).

D-ribulose 5-phosphate contacts are provided by residues 37-38, Asp-42, 150-154, and Glu-174; these read RE and RPGHT. Glu-38 serves as a coordination point for Mg(2+). His-153 serves as a coordination point for Mg(2+).

The protein belongs to the DHBP synthase family. In terms of assembly, homodimer. The cofactor is Mg(2+). It depends on Mn(2+) as a cofactor.

The enzyme catalyses D-ribulose 5-phosphate = (2S)-2-hydroxy-3-oxobutyl phosphate + formate + H(+). It functions in the pathway cofactor biosynthesis; riboflavin biosynthesis; 2-hydroxy-3-oxobutyl phosphate from D-ribulose 5-phosphate: step 1/1. Functionally, catalyzes the conversion of D-ribulose 5-phosphate to formate and 3,4-dihydroxy-2-butanone 4-phosphate. The polypeptide is 3,4-dihydroxy-2-butanone 4-phosphate synthase (Mannheimia succiniciproducens (strain KCTC 0769BP / MBEL55E)).